A 368-amino-acid chain; its full sequence is tRNA/tmRNA (uracil-C(5))-methyltransferase (368 aa).

The S-adenosyl-L-methionine site is built by Gln190, Tyr218, Asn223, Glu239, and Asp301. The Nucleophile role is filled by Cys326. Glu360 functions as the Proton acceptor in the catalytic mechanism.

The protein belongs to the class I-like SAM-binding methyltransferase superfamily. RNA M5U methyltransferase family. TrmA subfamily.

The enzyme catalyses uridine(54) in tRNA + S-adenosyl-L-methionine = 5-methyluridine(54) in tRNA + S-adenosyl-L-homocysteine + H(+). The catalysed reaction is uridine(341) in tmRNA + S-adenosyl-L-methionine = 5-methyluridine(341) in tmRNA + S-adenosyl-L-homocysteine + H(+). Functionally, dual-specificity methyltransferase that catalyzes the formation of 5-methyluridine at position 54 (m5U54) in all tRNAs, and that of position 341 (m5U341) in tmRNA (transfer-mRNA). The sequence is that of tRNA/tmRNA (uracil-C(5))-methyltransferase from Aliivibrio salmonicida (strain LFI1238) (Vibrio salmonicida (strain LFI1238)).